A 75-amino-acid chain; its full sequence is Large ribosomal subunit protein uL29 (75 aa).

The protein belongs to the universal ribosomal protein uL29 family.

The sequence is that of Large ribosomal subunit protein uL29 from Ureaplasma urealyticum serovar 10 (strain ATCC 33699 / Western).